A 92-amino-acid chain; its full sequence is Small ribosomal subunit protein bS20 (92 aa).

A disordered region spans residues 1–23; the sequence is MANSPSAKKRAKQAEKRRSHNAS. Over residues 7–20 the composition is skewed to basic residues; the sequence is AKKRAKQAEKRRSH.

This sequence belongs to the bacterial ribosomal protein bS20 family.

In terms of biological role, binds directly to 16S ribosomal RNA. In Ectopseudomonas mendocina (strain ymp) (Pseudomonas mendocina), this protein is Small ribosomal subunit protein bS20.